A 197-amino-acid polypeptide reads, in one-letter code: Peptide deformylase (197 aa).

2 residues coordinate Fe cation: Cys106 and His148. Glu149 is an active-site residue. Residue His152 participates in Fe cation binding.

Belongs to the polypeptide deformylase family. Fe(2+) is required as a cofactor.

The catalysed reaction is N-terminal N-formyl-L-methionyl-[peptide] + H2O = N-terminal L-methionyl-[peptide] + formate. In terms of biological role, removes the formyl group from the N-terminal Met of newly synthesized proteins. Requires at least a dipeptide for an efficient rate of reaction. N-terminal L-methionine is a prerequisite for activity but the enzyme has broad specificity at other positions. This is Peptide deformylase from Mycobacterium ulcerans (strain Agy99).